Consider the following 140-residue polypeptide: Nucleoside diphosphate kinase (140 aa).

ATP contacts are provided by K11, F59, R87, T93, R104, and N114. Catalysis depends on H117, which acts as the Pros-phosphohistidine intermediate.

Belongs to the NDK family. Homotetramer. It depends on Mg(2+) as a cofactor.

It is found in the cytoplasm. It carries out the reaction a 2'-deoxyribonucleoside 5'-diphosphate + ATP = a 2'-deoxyribonucleoside 5'-triphosphate + ADP. The enzyme catalyses a ribonucleoside 5'-diphosphate + ATP = a ribonucleoside 5'-triphosphate + ADP. Its function is as follows. Major role in the synthesis of nucleoside triphosphates other than ATP. The ATP gamma phosphate is transferred to the NDP beta phosphate via a ping-pong mechanism, using a phosphorylated active-site intermediate. This Sinorhizobium medicae (strain WSM419) (Ensifer medicae) protein is Nucleoside diphosphate kinase.